The following is a 313-amino-acid chain: Zinc transporter ZitB (313 aa).

Topologically, residues 1–20 (MAHSHSHTSSHLPEDNNARR) are cytoplasmic. Residues 21–41 (LLYAFGVTAGFMLVEVVGGFL) form a helical membrane-spanning segment. The Periplasmic portion of the chain corresponds to 42–47 (SGSLAL). A helical membrane pass occupies residues 48–68 (LADAGHMLTDTAALLFALLAV). The Cytoplasmic segment spans residues 69–89 (QFSRRPPTIRHTFGWLRLTTL). The helical transmembrane segment at 90–110 (AAFVNAIALVVITILIVWEAI) threads the bilayer. Over 111–121 (ERFRTPRPVEG) the chain is Periplasmic. The chain crosses the membrane as a helical span at residues 122-142 (GMMMAIAVAGLLANILSFWLL). Residues 143 to 159 (HHGSEEKNLNVRAAALH) are Cytoplasmic-facing. The helical transmembrane segment at 160 to 180 (VLGDLLGSVGAIIAALIIIWT) threads the bilayer. Residue Gly-181 is a topological domain, periplasmic. A helical transmembrane segment spans residues 182 to 202 (WTPADPILSILVSLLVLRSAW). Topologically, residues 203 to 313 (RLLKDSVNEL…GVSGHSHHHH (111 aa)) are cytoplasmic.

The protein belongs to the cation diffusion facilitator (CDF) transporter (TC 2.A.4) family. SLC30A subfamily.

Its subcellular location is the cell inner membrane. Involved in zinc efflux across the cytoplasmic membrane, thus reducing zinc accumulation in the cytoplasm and rendering bacteria more resistant to zinc. It may contribute to zinc homeostasis at low concentrations of zinc, whereas ZntA is required for growth at more toxic concentrations. This is Zinc transporter ZitB (zitB) from Escherichia coli (strain K12).